The sequence spans 1138 residues: uncharacterized protein (1138 aa).

The first 28 residues, methionine 1–alanine 28, serve as a signal peptide directing secretion. The next 7 helical transmembrane spans lie at isoleucine 331–glycine 351, tyrosine 359–threonine 379, methionine 392–methionine 412, methionine 494–valine 514, cysteine 520–phenylalanine 540, methionine 554–valine 574, and isoleucine 699–phenylalanine 719. Over residues aspartate 775 to valine 784 the composition is skewed to gly residues. Disordered regions lie at residues aspartate 775–glycine 914, glycine 958–alanine 977, and glutamate 995–arginine 1071. The span at alanine 801–serine 830 shows a compositional bias: low complexity. Over residues threonine 838 to alanine 852 the composition is skewed to pro residues. The segment covering isoleucine 854 to threonine 869 has biased composition (polar residues). Composition is skewed to basic and acidic residues over residues isoleucine 875–aspartate 888, arginine 961–alanine 977, glutamate 995–asparagine 1032, and leucine 1058–arginine 1071.

It belongs to the TrbL/VirB6 family.

The protein localises to the cell membrane. This is an uncharacterized protein from Rickettsia felis (strain ATCC VR-1525 / URRWXCal2) (Rickettsia azadi).